The sequence spans 749 residues: Chitin synthase G (749 aa).

5 consecutive transmembrane segments (helical) span residues 40–60 (CVGE…PLPP), 73–93 (VLQW…WLFC), 421–441 (FMQN…ISII), 451–471 (PVGF…YFGI), and 483–503 (LMFI…IFTA). The disordered stretch occupies residues 683–749 (IESGSGIPSG…RRYMQPEQMV (67 aa)). The segment covering 697–718 (LSSSVPQSGMQQSRAVPGNMSQ) has biased composition (polar residues). Asn-715 is a glycosylation site (N-linked (GlcNAc...) asparagine). Residues 728 to 742 (YTKRPSRIPRQKRRY) are compositionally biased toward basic residues.

The protein belongs to the chitin synthase family. Class VI subfamily.

The protein localises to the cell membrane. The catalysed reaction is [(1-&gt;4)-N-acetyl-beta-D-glucosaminyl](n) + UDP-N-acetyl-alpha-D-glucosamine = [(1-&gt;4)-N-acetyl-beta-D-glucosaminyl](n+1) + UDP + H(+). In terms of biological role, polymerizes chitin, a structural polymer of the cell wall and septum, by transferring the sugar moiety of UDP-GlcNAc to the non-reducing end of the growing chitin polymer. Plays an important role in septal growth or maintenance. Mediates colony spore formation. The chain is Chitin synthase G from Aspergillus niger (strain ATCC MYA-4892 / CBS 513.88 / FGSC A1513).